A 257-amino-acid chain; its full sequence is Type III pantothenate kinase (257 aa).

6–13 (DCGNTNTV) provides a ligand contact to ATP. 107–110 (GPDR) provides a ligand contact to substrate. The active-site Proton acceptor is the Asp-109. Residue Asp-129 participates in K(+) binding. Residue Thr-132 participates in ATP binding. Thr-184 is a binding site for substrate.

This sequence belongs to the type III pantothenate kinase family. In terms of assembly, homodimer. It depends on NH4(+) as a cofactor. Requires K(+) as cofactor.

The protein localises to the cytoplasm. It carries out the reaction (R)-pantothenate + ATP = (R)-4'-phosphopantothenate + ADP + H(+). The protein operates within cofactor biosynthesis; coenzyme A biosynthesis; CoA from (R)-pantothenate: step 1/5. In terms of biological role, catalyzes the phosphorylation of pantothenate (Pan), the first step in CoA biosynthesis. In Cereibacter sphaeroides (strain ATCC 17025 / ATH 2.4.3) (Rhodobacter sphaeroides), this protein is Type III pantothenate kinase.